The chain runs to 926 residues: Isoleucine--tRNA ligase (926 aa).

Residues 57–67 (PYANGNIHMGH) carry the 'HIGH' region motif. Glu-555 contributes to the L-isoleucyl-5'-AMP binding site. Residues 596 to 600 (KMSKS) carry the 'KMSKS' region motif. Residue Lys-599 coordinates ATP. The Zn(2+) site is built by Cys-897, Cys-900, Cys-914, and Cys-917.

Belongs to the class-I aminoacyl-tRNA synthetase family. IleS type 1 subfamily. Monomer. Zn(2+) is required as a cofactor.

It is found in the cytoplasm. It carries out the reaction tRNA(Ile) + L-isoleucine + ATP = L-isoleucyl-tRNA(Ile) + AMP + diphosphate. Functionally, catalyzes the attachment of isoleucine to tRNA(Ile). As IleRS can inadvertently accommodate and process structurally similar amino acids such as valine, to avoid such errors it has two additional distinct tRNA(Ile)-dependent editing activities. One activity is designated as 'pretransfer' editing and involves the hydrolysis of activated Val-AMP. The other activity is designated 'posttransfer' editing and involves deacylation of mischarged Val-tRNA(Ile). This chain is Isoleucine--tRNA ligase, found in Natranaerobius thermophilus (strain ATCC BAA-1301 / DSM 18059 / JW/NM-WN-LF).